A 96-amino-acid chain; its full sequence is Co-chaperonin GroES (96 aa).

The protein belongs to the GroES chaperonin family. As to quaternary structure, heptamer of 7 subunits arranged in a ring. Interacts with the chaperonin GroEL.

The protein resides in the cytoplasm. In terms of biological role, together with the chaperonin GroEL, plays an essential role in assisting protein folding. The GroEL-GroES system forms a nano-cage that allows encapsulation of the non-native substrate proteins and provides a physical environment optimized to promote and accelerate protein folding. GroES binds to the apical surface of the GroEL ring, thereby capping the opening of the GroEL channel. The chain is Co-chaperonin GroES from Shewanella pealeana (strain ATCC 700345 / ANG-SQ1).